We begin with the raw amino-acid sequence, 616 residues long: Dihydroxy-acid dehydratase (616 aa).

Aspartate 81 is a binding site for Mg(2+). [2Fe-2S] cluster is bound at residue cysteine 122. Residues aspartate 123 and lysine 124 each contribute to the Mg(2+) site. Lysine 124 bears the N6-carboxylysine mark. Cysteine 195 serves as a coordination point for [2Fe-2S] cluster. Glutamate 491 provides a ligand contact to Mg(2+). Residue serine 517 is the Proton acceptor of the active site.

Belongs to the IlvD/Edd family. As to quaternary structure, homodimer. [2Fe-2S] cluster serves as cofactor. Mg(2+) is required as a cofactor.

It carries out the reaction (2R)-2,3-dihydroxy-3-methylbutanoate = 3-methyl-2-oxobutanoate + H2O. The catalysed reaction is (2R,3R)-2,3-dihydroxy-3-methylpentanoate = (S)-3-methyl-2-oxopentanoate + H2O. Its pathway is amino-acid biosynthesis; L-isoleucine biosynthesis; L-isoleucine from 2-oxobutanoate: step 3/4. The protein operates within amino-acid biosynthesis; L-valine biosynthesis; L-valine from pyruvate: step 3/4. Functionally, functions in the biosynthesis of branched-chain amino acids. Catalyzes the dehydration of (2R,3R)-2,3-dihydroxy-3-methylpentanoate (2,3-dihydroxy-3-methylvalerate) into 2-oxo-3-methylpentanoate (2-oxo-3-methylvalerate) and of (2R)-2,3-dihydroxy-3-methylbutanoate (2,3-dihydroxyisovalerate) into 2-oxo-3-methylbutanoate (2-oxoisovalerate), the penultimate precursor to L-isoleucine and L-valine, respectively. The chain is Dihydroxy-acid dehydratase from Escherichia coli O81 (strain ED1a).